Here is a 236-residue protein sequence, read N- to C-terminus: Phospholipid hydroperoxide glutathione peroxidase 1, chloroplastic (236 aa).

Residues 1-16 are compositionally biased toward low complexity; it reads MVSMTTSSSSYGTFST. Residues 1 to 24 are disordered; it reads MVSMTTSSSSYGTFSTVVNSSRPN. A chloroplast-targeting transit peptide spans 1–64; that stretch reads MVSMTTSSSS…PINPGFLFKS (64 aa). Residue cysteine 111 is part of the active site.

It belongs to the glutathione peroxidase family. In terms of tissue distribution, expressed in leaves, stems, flowers, green siliques and seeds.

The protein resides in the plastid. It is found in the chloroplast. The catalysed reaction is a hydroperoxy polyunsaturated fatty acid + 2 glutathione = a hydroxy polyunsaturated fatty acid + glutathione disulfide + H2O. Its function is as follows. Protects cells and enzymes from oxidative damage, by catalyzing the reduction of hydrogen peroxide, lipid peroxides and organic hydroperoxide, by glutathione. The polypeptide is Phospholipid hydroperoxide glutathione peroxidase 1, chloroplastic (GPX1) (Arabidopsis thaliana (Mouse-ear cress)).